A 275-amino-acid polypeptide reads, in one-letter code: 4-diphosphocytidyl-2-C-methyl-D-erythritol kinase (275 aa).

The active site involves Lys-14. Position 98–108 (98–108 (PMGAGLGGGSS)) interacts with ATP. Residue Asp-140 is part of the active site.

This sequence belongs to the GHMP kinase family. IspE subfamily.

The enzyme catalyses 4-CDP-2-C-methyl-D-erythritol + ATP = 4-CDP-2-C-methyl-D-erythritol 2-phosphate + ADP + H(+). It participates in isoprenoid biosynthesis; isopentenyl diphosphate biosynthesis via DXP pathway; isopentenyl diphosphate from 1-deoxy-D-xylulose 5-phosphate: step 3/6. Functionally, catalyzes the phosphorylation of the position 2 hydroxy group of 4-diphosphocytidyl-2C-methyl-D-erythritol. The chain is 4-diphosphocytidyl-2-C-methyl-D-erythritol kinase from Francisella tularensis subsp. tularensis (strain WY96-3418).